Here is a 719-residue protein sequence, read N- to C-terminus: Plasmin and fibronectin-binding protein A (719 aa).

Residues 1–45 form the signal peptide; it reads MLKIVKKLEVLMKYFVPNEVFSIRKLKVGTCSVLLAISILGSQGI. Disordered regions lie at residues 56-76 and 109-128; these read PMAT…SPTV and IRSN…TSTN. PbH1 repeat units lie at residues 287–310, 362–384, 397–419, 497–523, and 525–546; these read SNNV…QIAG, SENV…LVTA, PSNI…RFTG, VSDI…ELLR, and SDNL…VIED. Residues 601–658 adopt a coiled-coil conformation; the sequence is NNLSDKNEKEKNKEEKQSNSNNVIDSNQKNGEFNSSKDNRQMNDKIDNKQDNKTEEVN. The segment covering 606 to 617 has biased composition (basic and acidic residues); the sequence is KNEKEKNKEEKQ. The interval 606-655 is disordered; that stretch reads KNEKEKNKEEKQSNSNNVIDSNQKNGEFNSSKDNRQMNDKIDNKQDNKTE. Polar residues predominate over residues 623–634; that stretch reads VIDSNQKNGEFN. Over residues 635–655 the composition is skewed to basic and acidic residues; sequence SSKDNRQMNDKIDNKQDNKTE. The short motif at 685–689 is the LPXTG sorting signal element; sequence LPKTG. T688 carries the pentaglycyl murein peptidoglycan amidated threonine modification. The propeptide at 689-719 is removed by sortase; sequence GSNKIMELFLTVTGIGLLLTLKGLKYYGKDK.

The protein resides in the secreted. The protein localises to the cell wall. Acts as a fibronectin-dependent adhesin and invasin. Binds host (in this case human) fibronectin, plasmin, plasminogen, and human serum albumin. Where the bacteria adhere to human cells there is major recruitment of microvilli which seem to fuse to cover the streptococcal chains. Antibodies to this protein reduce bacterial growth in human blood. The polypeptide is Plasmin and fibronectin-binding protein A (pfbA) (Streptococcus pneumoniae (strain ATCC BAA-255 / R6)).